The chain runs to 273 residues: Ribosomal RNA small subunit methyltransferase A (273 aa).

S-adenosyl-L-methionine is bound by residues asparagine 18, leucine 20, glycine 45, glutamate 66, aspartate 91, and asparagine 113.

Belongs to the class I-like SAM-binding methyltransferase superfamily. rRNA adenine N(6)-methyltransferase family. RsmA subfamily.

The protein localises to the cytoplasm. The enzyme catalyses adenosine(1518)/adenosine(1519) in 16S rRNA + 4 S-adenosyl-L-methionine = N(6)-dimethyladenosine(1518)/N(6)-dimethyladenosine(1519) in 16S rRNA + 4 S-adenosyl-L-homocysteine + 4 H(+). Its function is as follows. Specifically dimethylates two adjacent adenosines (A1518 and A1519) in the loop of a conserved hairpin near the 3'-end of 16S rRNA in the 30S particle. May play a critical role in biogenesis of 30S subunits. This chain is Ribosomal RNA small subunit methyltransferase A, found in Salmonella agona (strain SL483).